A 271-amino-acid polypeptide reads, in one-letter code: MLLAIDVRNTHTVVGLISGSGDHAKVVQQWRIRTEPEVTADELALTIDGLIGDDAERLTGASGLSTVPSVLHEVRVMLEQYWPNVPHVLIEPGVRTGIPLLVDNPKEVGADRIVNCLAAYHKYGTAAIVVDFGSSICVDVVSAKGEFLGGAIAPGVQVSSDAAAARSAALRRVELTRPRSVIGKNTVECMQAGAVFGFAGLVDGLVNRIRDDVDGFSGADVAVVATGHTAPLVLPDLRTVEHYDRHLTLDGLRLVFERNRANQRGKLKPAR.

Position 6 to 13 (6 to 13 (DVRNTHTV)) interacts with ATP. Residue 109–112 (GADR) participates in substrate binding. Catalysis depends on aspartate 111, which acts as the Proton acceptor. Residue aspartate 131 coordinates K(+). Residue serine 134 participates in ATP binding. Threonine 186 serves as a coordination point for substrate.

Belongs to the type III pantothenate kinase family. In terms of assembly, homodimer. Requires NH4(+) as cofactor. K(+) is required as a cofactor.

It localises to the cytoplasm. The enzyme catalyses (R)-pantothenate + ATP = (R)-4'-phosphopantothenate + ADP + H(+). The protein operates within cofactor biosynthesis; coenzyme A biosynthesis; CoA from (R)-pantothenate: step 1/5. Its function is as follows. Catalyzes the phosphorylation of pantothenate (Pan), the first step in CoA biosynthesis. In Mycolicibacterium smegmatis (strain ATCC 700084 / mc(2)155) (Mycobacterium smegmatis), this protein is Type III pantothenate kinase.